The following is a 273-amino-acid chain: Rho GTPase-activating protein gacB (273 aa).

Positions 1–192 (MTDQTLRLEN…YLISHFNEIF (192 aa)) constitute a Rho-GAP domain.

It is found in the cytoplasm. Functionally, rho GTPase-activating protein involved in the signal transduction pathway. This Dictyostelium discoideum (Social amoeba) protein is Rho GTPase-activating protein gacB (gacB).